A 180-amino-acid chain; its full sequence is 2-oxoglutarate dehydrogenase, mitochondrial (180 aa).

Residue Lys14 is modified to N6-succinyllysine. The residue at position 40 (Ser40) is a Phosphoserine. Residue Arg64 coordinates thiamine diphosphate.

The protein belongs to the alpha-ketoglutarate dehydrogenase family. As to quaternary structure, homodimer. The 2-oxoglutarate dehydrogenase complex is composed of OGDH (2-oxoglutarate dehydrogenase; E1), DLST (dihydrolipoamide succinyltransferase; E2) and DLD (dihydrolipoamide dehydrogenase; E3). It contains multiple copies of the three enzymatic components (E1, E2 and E3). In the nucleus, the 2-oxoglutarate dehydrogenase complex associates with KAT2A. Interacts with ABHD11; this interaction maintains the functional lipoylation of the 2-oxoglutarate dehydrogenase complex. Requires thiamine diphosphate as cofactor. It depends on Mg(2+) as a cofactor.

The protein localises to the mitochondrion matrix. It is found in the nucleus. The enzyme catalyses N(6)-[(R)-lipoyl]-L-lysyl-[protein] + 2-oxoglutarate + H(+) = N(6)-[(R)-S(8)-succinyldihydrolipoyl]-L-lysyl-[protein] + CO2. Its activity is regulated as follows. Calcium ions and ADP stimulate, whereas ATP and NADH reduce catalytic activity. Functionally, 2-oxoglutarate dehydrogenase (E1) component of the 2-oxoglutarate dehydrogenase complex (OGDHC), which mediates the decarboxylation of alpha-ketoglutarate. The 2-oxoglutarate dehydrogenase complex catalyzes the overall conversion of 2-oxoglutarate to succinyl-CoA and CO(2). The 2-oxoglutarate dehydrogenase complex is mainly active in the mitochondrion. A fraction of the 2-oxoglutarate dehydrogenase complex also localizes in the nucleus and is required for lysine succinylation of histones: associates with KAT2A on chromatin and provides succinyl-CoA to histone succinyltransferase KAT2A. In Mesocricetus auratus (Golden hamster), this protein is 2-oxoglutarate dehydrogenase, mitochondrial.